Reading from the N-terminus, the 339-residue chain is DNA double-strand break repair nuclease NurA (339 aa).

Mn(2+)-binding residues include Asp-58 and Asp-133.

It belongs to the NurA family. In terms of assembly, homodimer. Forms a complex with HerA. Mn(2+) serves as cofactor.

Its activity is regulated as follows. Nuclease activity requires the presence of HerA. Another report shows endo- and exonuclease activity in the absence of HerA; HerA stimulates the exo- but not endonuclease. LhrC-Core (Hel112) inhibits the exonuclease activity of the HerA-NurA complex on ss- and dsDNA, has no effect on the nicking activity of NurA. Endo- and exonuclease activities are inhibited by ATP; ATP may subtract divalent ions from the reaction preventing nuclease activity, HerA can alleviate ATP inhibition. Involved in DNA double-strand break (DSB) repair. Probably acts with HerA to stimulate resection of the 5' strand and produce the long 3' single-strand that is required for RadA loading. NurA and HerA together stimulate the end-resection of six nucleotides of a linear DNA substrate. Processes linear double-stranded (ds)DNA probes with 3' or 5' single-stranded overhangs or blunt ends. Has endonuclease activity on single-stranded (ss)DNA and nicking activity on dsDNA without HerA as well as 5'- and 3'-exonuclease activity on ssDNA. Binds ssDNA, dsDNA, forked and bubble DNA equally well. The polypeptide is DNA double-strand break repair nuclease NurA (Saccharolobus solfataricus (strain ATCC 35092 / DSM 1617 / JCM 11322 / P2) (Sulfolobus solfataricus)).